Consider the following 251-residue polypeptide: Triosephosphate isomerase (251 aa).

Residue 9–11 (NWK) participates in substrate binding. Catalysis depends on His-95, which acts as the Electrophile. Glu-167 serves as the catalytic Proton acceptor. Substrate contacts are provided by residues Gly-173, Ser-213, and 234–235 (GG).

This sequence belongs to the triosephosphate isomerase family. Homodimer.

It localises to the cytoplasm. The enzyme catalyses D-glyceraldehyde 3-phosphate = dihydroxyacetone phosphate. It participates in carbohydrate biosynthesis; gluconeogenesis. Its pathway is carbohydrate degradation; glycolysis; D-glyceraldehyde 3-phosphate from glycerone phosphate: step 1/1. Functionally, involved in the gluconeogenesis. Catalyzes stereospecifically the conversion of dihydroxyacetone phosphate (DHAP) to D-glyceraldehyde-3-phosphate (G3P). In Ligilactobacillus salivarius (strain UCC118) (Lactobacillus salivarius), this protein is Triosephosphate isomerase.